We begin with the raw amino-acid sequence, 205 residues long: Phosphoenolpyruvate guanylyltransferase (205 aa).

Phosphoenolpyruvate contacts are provided by Thr-138, Gly-154, and Ser-157.

The protein belongs to the CofC family.

It carries out the reaction phosphoenolpyruvate + GTP + H(+) = enolpyruvoyl-2-diphospho-5'-guanosine + diphosphate. It functions in the pathway cofactor biosynthesis; coenzyme F420 biosynthesis. Guanylyltransferase that catalyzes the activation of phosphoenolpyruvate (PEP) as enolpyruvoyl-2-diphospho-5'-guanosine, via the condensation of PEP with GTP. It is involved in the biosynthesis of coenzyme F420, a hydride carrier cofactor. The sequence is that of Phosphoenolpyruvate guanylyltransferase from Chloroflexus aurantiacus (strain ATCC 29364 / DSM 637 / Y-400-fl).